Reading from the N-terminus, the 313-residue chain is DNA-directed RNA polymerase subunit alpha (313 aa).

The interval 1 to 227 (MMLDVAPPRF…DFFGLFAEGY (227 aa)) is alpha N-terminal domain (alpha-NTD). The interval 242–313 (RPVITDERPI…YGYTLESGRE (72 aa)) is alpha C-terminal domain (alpha-CTD).

It belongs to the RNA polymerase alpha chain family. Homodimer. The RNAP catalytic core consists of 2 alpha, 1 beta, 1 beta' and 1 omega subunit. When a sigma factor is associated with the core the holoenzyme is formed, which can initiate transcription.

The catalysed reaction is RNA(n) + a ribonucleoside 5'-triphosphate = RNA(n+1) + diphosphate. DNA-dependent RNA polymerase catalyzes the transcription of DNA into RNA using the four ribonucleoside triphosphates as substrates. The chain is DNA-directed RNA polymerase subunit alpha from Rubrobacter xylanophilus (strain DSM 9941 / JCM 11954 / NBRC 16129 / PRD-1).